Reading from the N-terminus, the 265-residue chain is Eukaryotic translation initiation factor 3 subunit J (265 aa).

Disordered regions lie at residues 1–113 (MPPS…DSDL) and 215–237 (SNEKMKEERAADKGSKKTKAAKT). The span at 27 to 45 (DEEDGDVLDSWDAADDSEV) shows a compositional bias: acidic residues. A coiled-coil region spans residues 43 to 95 (SEVEREKAAKAAEAKAKAEAEAAANKKSKAQRIAEHKTRRKAAEDEEDDESDE). A compositionally biased stretch (basic and acidic residues) spans 46-62 (EREKAAKAAEAKAKAEA). A compositionally biased stretch (acidic residues) spans 86–97 (EDEEDDESDEDE). 2 stretches are compositionally biased toward basic and acidic residues: residues 98–113 (AEKRARLRRTEKDSDL) and 217–229 (EKMKEERAADKGS).

The protein belongs to the eIF-3 subunit J family. Component of the eukaryotic translation initiation factor 3 (eIF-3) complex.

It localises to the cytoplasm. Its function is as follows. Component of the eukaryotic translation initiation factor 3 (eIF-3) complex, which is involved in protein synthesis of a specialized repertoire of mRNAs and, together with other initiation factors, stimulates binding of mRNA and methionyl-tRNAi to the 40S ribosome. The eIF-3 complex specifically targets and initiates translation of a subset of mRNAs involved in cell proliferation. In Emericella nidulans (strain FGSC A4 / ATCC 38163 / CBS 112.46 / NRRL 194 / M139) (Aspergillus nidulans), this protein is Eukaryotic translation initiation factor 3 subunit J (hcr1).